The following is a 266-amino-acid chain: Small ribosomal subunit protein eS1 (266 aa).

The disordered stretch occupies residues 234 to 266 (EGGTGTATKATGDDTGAKVERADGYEPPIQETV). Residues 244–257 (TGDDTGAKVERADG) show a composition bias toward basic and acidic residues.

It belongs to the eukaryotic ribosomal protein eS1 family. As to quaternary structure, component of the small ribosomal subunit. Mature ribosomes consist of a small (40S) and a large (60S) subunit. The 40S subunit contains about 33 different proteins and 1 molecule of RNA (18S). The 60S subunit contains about 49 different proteins and 3 molecules of RNA (28S, 5.8S and 5S). Part of the small subunit (SSU) processome, composed of more than 70 proteins and the RNA chaperone small nucleolar RNA (snoRNA) U3.

It localises to the cytoplasm. Its subcellular location is the nucleus. The protein localises to the nucleolus. Functionally, component of the small ribosomal subunit. The ribosome is a large ribonucleoprotein complex responsible for the synthesis of proteins in the cell. Part of the small subunit (SSU) processome, first precursor of the small eukaryotic ribosomal subunit. During the assembly of the SSU processome in the nucleolus, many ribosome biogenesis factors, an RNA chaperone and ribosomal proteins associate with the nascent pre-rRNA and work in concert to generate RNA folding, modifications, rearrangements and cleavage as well as targeted degradation of pre-ribosomal RNA by the RNA exosome. May play a role during erythropoiesis. The polypeptide is Small ribosomal subunit protein eS1 (rps3a) (Solea senegalensis (Senegalese sole)).